A 205-amino-acid chain; its full sequence is Holliday junction branch migration complex subunit RuvA (205 aa).

Residues 1-64 form a domain I region; sequence MIGKLKGIID…EDQIKLFGFR (64 aa). The domain II stretch occupies residues 65–143; sequence TDTEREWFRL…ALSAVDPAVV (79 aa). The segment at 144–154 is flexible linker; the sequence is KLSGAIDDNRA. The segment at 154–205 is domain III; sequence APRAVTDAISALVNLGYGQPQAAAAVATASRTAGEDAETAQLIKLGLKELSK.

The protein belongs to the RuvA family. In terms of assembly, homotetramer. Forms an RuvA(8)-RuvB(12)-Holliday junction (HJ) complex. HJ DNA is sandwiched between 2 RuvA tetramers; dsDNA enters through RuvA and exits via RuvB. An RuvB hexamer assembles on each DNA strand where it exits the tetramer. Each RuvB hexamer is contacted by two RuvA subunits (via domain III) on 2 adjacent RuvB subunits; this complex drives branch migration. In the full resolvosome a probable DNA-RuvA(4)-RuvB(12)-RuvC(2) complex forms which resolves the HJ.

It is found in the cytoplasm. The RuvA-RuvB-RuvC complex processes Holliday junction (HJ) DNA during genetic recombination and DNA repair, while the RuvA-RuvB complex plays an important role in the rescue of blocked DNA replication forks via replication fork reversal (RFR). RuvA specifically binds to HJ cruciform DNA, conferring on it an open structure. The RuvB hexamer acts as an ATP-dependent pump, pulling dsDNA into and through the RuvAB complex. HJ branch migration allows RuvC to scan DNA until it finds its consensus sequence, where it cleaves and resolves the cruciform DNA. This Rhodopseudomonas palustris (strain TIE-1) protein is Holliday junction branch migration complex subunit RuvA.